The primary structure comprises 119 residues: cAMP-responsive element-binding protein-like 2 (119 aa).

Positions 1-23 (MDDSKIVAGKVKKPGKRGRKPAK) are disordered. Residues 10-21 (KVKKPGKRGRKP) show a composition bias toward basic residues. In terms of domain architecture, bZIP spans 23-86 (KIDLKAKLER…LAMDQGKIPS (64 aa)). The interval 29 to 60 (KLERSRQSARECRARKKLRYQYLEELVSSKER) is basic motif. The segment at 62–69 (ICALREEL) is leucine-zipper. The interval 95 to 119 (DEQKTPQSCSNKTTKNSKYSSSSGI) is disordered. Residues 102-119 (SCSNKTTKNSKYSSSSGI) show a composition bias toward low complexity.

The protein belongs to the bZIP family. ATF subfamily.

The protein localises to the nucleus. In terms of biological role, probable regulator of creb1 transcriptional activity which is involved in adipose cells differentiation. May also play a regulatory role in the cell cycle. In Danio rerio (Zebrafish), this protein is cAMP-responsive element-binding protein-like 2 (crebl2).